Reading from the N-terminus, the 257-residue chain is Adenosylcobinamide-GDP ribazoletransferase (257 aa).

Helical transmembrane passes span 30 to 50 (IVYFPLVGFVIGILSYLIGWI), 52 to 72 (MLLFEPFIASIIITLAGVLIT), 109 to 129 (SLLAIMFVLLLKVGFVYDIIS), 132 to 152 (SLWVIIFMPMIARLGVMLLTY), 175 to 195 (LITAIIYTLLIVALITKFIFL), 198 to 218 (NIVLIKVLGSIIVVFVFIILF), and 237 to 257 (GIELSELVYLIYIYLLIFMFF).

Belongs to the CobS family. Requires Mg(2+) as cofactor.

It is found in the cell membrane. The catalysed reaction is alpha-ribazole + adenosylcob(III)inamide-GDP = adenosylcob(III)alamin + GMP + H(+). The enzyme catalyses alpha-ribazole 5'-phosphate + adenosylcob(III)inamide-GDP = adenosylcob(III)alamin 5'-phosphate + GMP + H(+). Its pathway is cofactor biosynthesis; adenosylcobalamin biosynthesis; adenosylcobalamin from cob(II)yrinate a,c-diamide: step 7/7. In terms of biological role, joins adenosylcobinamide-GDP and alpha-ribazole to generate adenosylcobalamin (Ado-cobalamin). Also synthesizes adenosylcobalamin 5'-phosphate from adenosylcobinamide-GDP and alpha-ribazole 5'-phosphate. The polypeptide is Adenosylcobinamide-GDP ribazoletransferase (Clostridioides difficile (strain 630) (Peptoclostridium difficile)).